The primary structure comprises 412 residues: Gamma-glutamyl phosphate reductase (412 aa).

It belongs to the gamma-glutamyl phosphate reductase family.

The protein resides in the cytoplasm. It carries out the reaction L-glutamate 5-semialdehyde + phosphate + NADP(+) = L-glutamyl 5-phosphate + NADPH + H(+). Its pathway is amino-acid biosynthesis; L-proline biosynthesis; L-glutamate 5-semialdehyde from L-glutamate: step 2/2. In terms of biological role, catalyzes the NADPH-dependent reduction of L-glutamate 5-phosphate into L-glutamate 5-semialdehyde and phosphate. The product spontaneously undergoes cyclization to form 1-pyrroline-5-carboxylate. The chain is Gamma-glutamyl phosphate reductase from Aliarcobacter butzleri (strain RM4018) (Arcobacter butzleri).